A 165-amino-acid chain; its full sequence is Phosphopantetheine adenylyltransferase (165 aa).

A substrate-binding site is contributed by S10. ATP is bound by residues 10 to 11 (SF) and H18. Residues K42, L74, and R88 each contribute to the substrate site. ATP-binding positions include 89-91 (GLR), E99, and 124-130 (YSYLSSS).

Belongs to the bacterial CoaD family. Homohexamer. Mg(2+) is required as a cofactor.

The protein localises to the cytoplasm. The enzyme catalyses (R)-4'-phosphopantetheine + ATP + H(+) = 3'-dephospho-CoA + diphosphate. It functions in the pathway cofactor biosynthesis; coenzyme A biosynthesis; CoA from (R)-pantothenate: step 4/5. Its function is as follows. Reversibly transfers an adenylyl group from ATP to 4'-phosphopantetheine, yielding dephospho-CoA (dPCoA) and pyrophosphate. This chain is Phosphopantetheine adenylyltransferase, found in Halalkalibacterium halodurans (strain ATCC BAA-125 / DSM 18197 / FERM 7344 / JCM 9153 / C-125) (Bacillus halodurans).